A 495-amino-acid polypeptide reads, in one-letter code: Adenosylhomocysteinase (495 aa).

Positions 71, 156, and 218 each coordinate substrate. Residue 219 to 221 (TTT) participates in NAD(+) binding. Substrate-binding residues include Lys-248 and Asp-252. NAD(+)-binding positions include Asn-253, 282–287 (GYGDVG), Glu-305, Asn-340, 361–363 (IGH), and Asn-409.

Belongs to the adenosylhomocysteinase family. NAD(+) serves as cofactor.

It localises to the cytoplasm. It carries out the reaction S-adenosyl-L-homocysteine + H2O = L-homocysteine + adenosine. The protein operates within amino-acid biosynthesis; L-homocysteine biosynthesis; L-homocysteine from S-adenosyl-L-homocysteine: step 1/1. In terms of biological role, may play a key role in the regulation of the intracellular concentration of adenosylhomocysteine. This chain is Adenosylhomocysteinase, found in Mycobacterium tuberculosis (strain ATCC 25177 / H37Ra).